Reading from the N-terminus, the 299-residue chain is Glycine--tRNA ligase alpha subunit (299 aa).

Belongs to the class-II aminoacyl-tRNA synthetase family. Tetramer of two alpha and two beta subunits.

The protein resides in the cytoplasm. The enzyme catalyses tRNA(Gly) + glycine + ATP = glycyl-tRNA(Gly) + AMP + diphosphate. This chain is Glycine--tRNA ligase alpha subunit, found in Dictyoglomus turgidum (strain DSM 6724 / Z-1310).